The following is a 777-amino-acid chain: Myotubularin-related protein 10 (777 aa).

Residues 196–217 (PSGDGGGGGGGGNGAGGGSSQK) form a disordered region. The segment covering 197-214 (SGDGGGGGGGGNGAGGGS) has biased composition (gly residues). Positions 221–661 (FETYSDWDRE…THIKLWKLCY (441 aa)) constitute a Myotubularin phosphatase domain. Phosphoserine occurs at positions 607 and 751.

This sequence belongs to the protein-tyrosine phosphatase family. Non-receptor class myotubularin subfamily.

The sequence is that of Myotubularin-related protein 10 (MTMR10) from Homo sapiens (Human).